A 215-amino-acid chain; its full sequence is Sodium channel regulatory subunit beta-2 (215 aa).

The first 29 residues, 1-29 (MHRDAWLPRPAFSLTGLSLFFSLVPPGRS), serve as a signal peptide directing secretion. At 30–157 (MEVTAPTTLS…LEVPPERDST (128 aa)) the chain is on the extracellular side. One can recognise an Ig-like C2-type domain in the interval 32–154 (VTAPTTLSVL…QVLLEVPPER (123 aa)). N-linked (GlcNAc...) asparagine glycosylation is found at Asn42, Asn66, and Asn74. Disulfide bonds link Cys50–Cys127 and Cys72–Cys75. The helical transmembrane segment at 158 to 179 (VAVIVGASVGGFLAVVILVLMV) threads the bilayer. Over 180-215 (VKCVRRKKEQKLSTDDLKTEEEGKMDGEGNAEDGTK) the chain is Cytoplasmic. A disordered region spans residues 188-215 (EQKLSTDDLKTEEEGKMDGEGNAEDGTK). Basic and acidic residues predominate over residues 189-215 (QKLSTDDLKTEEEGKMDGEGNAEDGTK). Residue Ser192 is modified to Phosphoserine.

It belongs to the sodium channel auxiliary subunit SCN2B (TC 8.A.17) family. As to quaternary structure, a voltage-gated sodium (Nav) channel consists of an ion-conducting pore-forming alpha subunit functional on its own that is regulated by one or more beta subunits. The beta subunit SCN2B is disulfide-linked to the pore-forming alpha subunit. Interacts with SCN1A; regulatory subunit of SCN1A/Nav1.1. Interacts with SCN2A; regulatory subunit of SCN2A/Nav1.2. Interacts with SCN3A; regulatory subunit of SCN3A/Nav1.3. Interacts with SCN5A; regulatory subunit of SCN5A/Nav1.5. Interacts with SCN8A; regulatory subunit of SCN8A/Nav1.6. Interacts with SCN9A; regulatory subunit of SCN9A/Nav1.7. Interacts with SCN10A; regulatory subunit of SCN10A/Nav1.8. Interacts with TNR; may play a crucial role in clustering and regulation of activity of SCN2B-containing Nav channels at nodes of Ranvier.

Its subcellular location is the cell membrane. It localises to the cell projection. The protein localises to the axon. Functionally, regulatory subunit of multiple voltage-gated sodium (Nav) channels directly mediating the depolarization of excitable membranes. Navs, also called VGSCs (voltage-gated sodium channels) or VDSCs (voltage-dependent sodium channels), operate by switching between closed and open conformations depending on the voltage difference across the membrane. In the open conformation they allow Na(+) ions to selectively pass through the pore, along their electrochemical gradient. The influx of Na+ ions provokes membrane depolarization, initiating the propagation of electrical signals throughout cells and tissues. The accessory beta subunits participate in localization and functional modulation of the Nav channels. Modulates the activity of SCN1A/Nav1.1, SCN2A/Nav1.2, SCN2A/Nav1.3, SCN5A/Nav1.5, SCN8A/Nav1.6, SCN9A/Nav1.7 and SCN10A/Nav1.8. This chain is Sodium channel regulatory subunit beta-2, found in Mus musculus (Mouse).